Consider the following 249-residue polypeptide: Tumor necrosis factor ligand superfamily member 12 (249 aa).

Topologically, residues methionine 1–leucine 21 are cytoplasmic. A helical; Signal-anchor for type II membrane protein membrane pass occupies residues alanine 22–glycine 45. The Extracellular segment spans residues serine 46–histidine 249. A disordered region spans residues alanine 52–serine 78. One can recognise a THD domain in the interval isoleucine 107–valine 248. Asparagine 139 carries an N-linked (GlcNAc...) asparagine glycan. Cysteine 191 and cysteine 210 are oxidised to a cystine.

This sequence belongs to the tumor necrosis factor family. Homotrimer. Interacts with the angiogenic factor AGGF1/VG5Q. Post-translationally, the soluble form is produced from the membrane form by proteolytic processing. In terms of tissue distribution, widely expressed.

The protein localises to the cell membrane. The protein resides in the secreted. Binds to FN14 and possibly also to TNRFSF12/APO3. Weak inducer of apoptosis in some cell types. Mediates NF-kappa-B activation. Promotes angiogenesis and the proliferation of endothelial cells. Also involved in induction of inflammatory cytokines. Promotes IL8 secretion. The protein is Tumor necrosis factor ligand superfamily member 12 (Tnfsf12) of Mus musculus (Mouse).